Here is a 772-residue protein sequence, read N- to C-terminus: Angiomotin-like protein 2 (772 aa).

Disordered stretches follow at residues Gly41–Ser158, Arg170–Phe239, and Gln260–Gln299. Composition is skewed to basic and acidic residues over residues Gln80–Leu91, Lys100–Ala112, and Arg142–His153. The tract at residues Gly101–Gly303 is required for interaction with CDH5. Phosphotyrosine; by FGFR1 is present on Tyr107. Residues His178–Ser191 are compositionally biased toward polar residues. The segment covering Pro197–Tyr214 has biased composition (pro residues). The segment at Gln221 to Gly303 is required for interaction with CDH1. Residues Ala305–Gln578 adopt a coiled-coil conformation. Glycyl lysine isopeptide (Lys-Gly) (interchain with G-Cter in ubiquitin) cross-links involve residues Lys343 and Lys404. Disordered stretches follow at residues Ile596–Gly615 and Gly680–Ser752. Residues Arg686–Ala699 show a composition bias toward basic and acidic residues. Polar residues predominate over residues Asp718–Cys733. Phosphoserine is present on residues Ser752 and Ser755. Positions Glu769–Ile772 match the PDZ-binding motif.

It belongs to the angiomotin family. In terms of assembly, part of a complex composed of AMOTL2, MAGI1 and CDH5, within the complex AMOTL2 acts as a scaffold protein for the interaction of MAGI1 with CDH5. The complex is required for coupling actin fibers to cell junctions in endothelial cells. Within the complex AMOTL2 (via its N-terminus) interacts with CDH5. Interacts (via N-terminus) with MAGI1. Interacts (via N-terminus) with ACTB; the interaction facilitates binding of cell junction complexes to actin fibers in endothelial cells. Interacts with CDH1; the interaction may facilitate binding of radial actin fibers to cell junction complexes. Interacts with SRC. Interacts with YAP1; the interaction is required for ubiquitination of AMOTL2 and localization of YAP1 to tight junctions. Interacts with WWP1; the interaction facilitates WWP1 interaction with the Crumbs complex and subsequent WWP1 translocation to the plasma membrane. WWP1 interaction with the Crumbs complex promotes WWP1 monoubiquitination of AMOTL2 which subsequently activates the Hippo signaling pathway. When ubiquitinated interacts with LATS2 (via UBA domain); the interaction promotes LATS2 phosphorylation of YAP1. Interacts (via PPXY motif) with WWTR1/TAZ (via WW domain); the interaction promotes WWTR1/TAZ localization to the cytoplasm and thereby inhibition of its transcriptional properties. Interacts with PHLDB2; interaction may facilitate PHLDB2 localization to the myotube podosome cortex that surrounds the core. Phosphorylation at Tyr-107 is necessary for efficient binding to SRC and synergistically functioning with SRC to activate the downstream MAPK pathway. In terms of processing, monoubiquitinated at Lys-343 and Lys-404 by Crumbs complex-bound WWP1. De-ubiquitinated at Lys-343 and Lys-404 by USP9X; the interaction may be promoted by cell contact inhibition. Deubiquitination of AMOTL2 negatively regulates Hippo signaling activation. In terms of tissue distribution, expressed in skeletal muscle at neuromuscular junctions (at protein level).

The protein resides in the recycling endosome. Its subcellular location is the cytoplasm. It is found in the cell projection. The protein localises to the podosome. It localises to the cell junction. Regulates the translocation of phosphorylated SRC to peripheral cell-matrix adhesion sites. Required for proper architecture of actin filaments. Plays a role in coupling actin fibers to cell junctions in endothelial cells and is therefore required for correct endothelial cell morphology via facilitating transcellular transmission of mechanical force resulting in endothelial cell elongation. Required for the anchoring of radial actin fibers to CDH1 junction complexes at the cell membrane which facilitates organization of radial actin fiber structure and cellular response to contractile forces. This contributes to maintenance of cell area, size, shape, epithelial sheet organization and trophectoderm cell properties that facilitate blastocyst zona hatching. Inhibits the Wnt/beta-catenin signaling pathway, probably by recruiting CTNNB1 to recycling endosomes and hence preventing its translocation to the nucleus. Participates in angiogenesis. Activates the Hippo signaling pathway in response to cell contact inhibition via interaction with and ubiquitination by Crumbs complex-bound WWP1. Ubiquitinated AMOTL2 then interacts with LATS2 which in turn phosphorylates YAP1, excluding it from the nucleus and localizing it to the cytoplasm and tight junctions, therefore ultimately repressing YAP1-driven transcription of target genes. Acts to inhibit WWTR1/TAZ transcriptional coactivator activity via sequestering WWTR1/TAZ in the cytoplasm and at tight junctions. Regulates the size and protein composition of the podosome cortex and core at myofibril neuromuscular junctions. Selectively promotes FGF-induced MAPK activation through SRC. May play a role in the polarity, proliferation and migration of endothelial cells. This chain is Angiomotin-like protein 2, found in Mus musculus (Mouse).